The sequence spans 119 residues: Protein TusC (119 aa).

Belongs to the DsrF/TusC family. Heterohexamer, formed by a dimer of trimers. The hexameric TusBCD complex contains 2 copies each of TusB, TusC and TusD. The TusBCD complex interacts with TusE.

It is found in the cytoplasm. Its function is as follows. Part of a sulfur-relay system required for 2-thiolation of 5-methylaminomethyl-2-thiouridine (mnm(5)s(2)U) at tRNA wobble positions. The polypeptide is Protein TusC (Cronobacter sakazakii (strain ATCC BAA-894) (Enterobacter sakazakii)).